The primary structure comprises 310 residues: Cytochrome f (310 aa).

The signal sequence occupies residues 1 to 27; sequence MRRILTFFLGSIIIGLSIIISPSSSFA. Heme is bound by residues Tyr28, Cys48, Cys51, and His52. The chain crosses the membrane as a helical span at residues 277-297; the sequence is VIGLIAFFAGVALTQILLVLK.

Belongs to the cytochrome f family. As to quaternary structure, the 4 large subunits of the cytochrome b6-f complex are cytochrome b6, subunit IV (17 kDa polypeptide, PetD), cytochrome f and the Rieske protein, while the 4 small subunits are PetG, PetL, PetM and PetN. The complex functions as a dimer. It depends on heme as a cofactor.

It is found in the cellular thylakoid membrane. Component of the cytochrome b6-f complex, which mediates electron transfer between photosystem II (PSII) and photosystem I (PSI), cyclic electron flow around PSI, and state transitions. This Prochlorococcus marinus (strain SARG / CCMP1375 / SS120) protein is Cytochrome f.